Here is a 544-residue protein sequence, read N- to C-terminus: Ell-associated factor Eaf (544 aa).

The disordered stretch occupies residues 147–544 (QSVPMNMGHQ…LSSNSSDDDD (398 aa)). Residues 193–202 (SSKDKVDFKP) show a composition bias toward basic and acidic residues. The residue at position 205 (serine 205) is a Phosphoserine. Residues 264-273 (SGSSTGSSSG) show a composition bias toward low complexity. Basic residues predominate over residues 287–299 (GKQRQAHGKRQQI). Composition is skewed to low complexity over residues 305–319 (PPVQ…QQQP), 333–374 (QPHP…QQRP), and 396–407 (ASQSVAQAAAVL). The segment covering 425-440 (DSSDSDSGSDSDDSTE) has biased composition (acidic residues). Composition is skewed to low complexity over residues 450–483 (EQQQ…HMNQ), 503–513 (QQPQPQPQQQQ), and 526–544 (NDLL…DDDD).

The protein belongs to the EAF family.

It is found in the nucleus. In terms of biological role, promotes transcriptional elongation by Su(Tpl)/ELL. Essential for development. The polypeptide is Ell-associated factor Eaf (Drosophila persimilis (Fruit fly)).